Reading from the N-terminus, the 215-residue chain is NAD(P)H-quinone oxidoreductase subunit I (215 aa).

4Fe-4S ferredoxin-type domains follow at residues 55–84 and 95–124; these read GRIHYEFDKCIACEVCVRVCPINLPVVDWV and RNYSIDFGVCIFCGNCVEYCPTNCLSMTEE. Positions 64, 67, 70, 74, 104, 107, 110, and 114 each coordinate [4Fe-4S] cluster. The span at 169–180 shows a compositional bias: basic and acidic residues; the sequence is MDPHGVASDRPR. Positions 169-215 are disordered; that stretch reads MDPHGVASDRPRAGQLPAQVLETLTPPAKPTAKNDGQSSSEAKEGDA.

This sequence belongs to the complex I 23 kDa subunit family. In terms of assembly, NDH-1 is composed of at least 11 different subunits. The cofactor is [4Fe-4S] cluster.

The protein resides in the cellular thylakoid membrane. It catalyses the reaction a plastoquinone + NADH + (n+1) H(+)(in) = a plastoquinol + NAD(+) + n H(+)(out). It carries out the reaction a plastoquinone + NADPH + (n+1) H(+)(in) = a plastoquinol + NADP(+) + n H(+)(out). Its function is as follows. NDH-1 shuttles electrons from an unknown electron donor, via FMN and iron-sulfur (Fe-S) centers, to quinones in the respiratory and/or the photosynthetic chain. The immediate electron acceptor for the enzyme in this species is believed to be plastoquinone. Couples the redox reaction to proton translocation, and thus conserves the redox energy in a proton gradient. This Synechococcus sp. (strain CC9605) protein is NAD(P)H-quinone oxidoreductase subunit I.